An 864-amino-acid polypeptide reads, in one-letter code: Leucine--tRNA ligase (864 aa).

The short motif at 42–52 is the 'HIGH' region element; the sequence is PYPSGKLHMGH. A 'KMSKS' region motif is present at residues 624 to 628; the sequence is KMSKS. Residue lysine 627 coordinates ATP.

The protein belongs to the class-I aminoacyl-tRNA synthetase family.

It is found in the cytoplasm. It catalyses the reaction tRNA(Leu) + L-leucine + ATP = L-leucyl-tRNA(Leu) + AMP + diphosphate. The polypeptide is Leucine--tRNA ligase (Burkholderia cenocepacia (strain ATCC BAA-245 / DSM 16553 / LMG 16656 / NCTC 13227 / J2315 / CF5610) (Burkholderia cepacia (strain J2315))).